A 254-amino-acid polypeptide reads, in one-letter code: Hydroxyacylglutathione hydrolase (254 aa).

The Zn(2+) site is built by H52, H54, D56, H57, H109, D126, and H164.

The protein belongs to the metallo-beta-lactamase superfamily. Glyoxalase II family. As to quaternary structure, monomer. Zn(2+) serves as cofactor.

The catalysed reaction is an S-(2-hydroxyacyl)glutathione + H2O = a 2-hydroxy carboxylate + glutathione + H(+). The protein operates within secondary metabolite metabolism; methylglyoxal degradation; (R)-lactate from methylglyoxal: step 2/2. In terms of biological role, thiolesterase that catalyzes the hydrolysis of S-D-lactoyl-glutathione to form glutathione and D-lactic acid. This is Hydroxyacylglutathione hydrolase from Stenotrophomonas maltophilia (strain R551-3).